A 1793-amino-acid polypeptide reads, in one-letter code: Chitin synthase 5 (1793 aa).

The interval M1–Q28 is disordered. 5 N-linked (GlcNAc...) asparagine glycosylation sites follow: N70, N164, N638, N664, and N669. 2 helical membrane-spanning segments follow: residues V750–V770 and L786–F806. In terms of domain architecture, Cytochrome b5 heme-binding spans D815–A877. 3 N-linked (GlcNAc...) asparagine glycosylation sites follow: N897, N1019, and N1023. The chain crosses the membrane as a helical span at residues L1056–L1076. The N-linked (GlcNAc...) asparagine glycan is linked to N1421. 3 helical membrane passes run L1452–V1472, F1479–I1499, and I1507–Y1527. N1534 and N1705 each carry an N-linked (GlcNAc...) asparagine glycan. A DEK-C domain is found at G1735–A1791.

The protein belongs to the chitin synthase family. Class V subfamily.

It is found in the cell membrane. It carries out the reaction [(1-&gt;4)-N-acetyl-beta-D-glucosaminyl](n) + UDP-N-acetyl-alpha-D-glucosamine = [(1-&gt;4)-N-acetyl-beta-D-glucosaminyl](n+1) + UDP + H(+). Polymerizes chitin, a structural polymer of the cell wall and septum, by transferring the sugar moiety of UDP-GlcNAc to the non-reducing end of the growing chitin polymer. Regulates Germination and Tolerance to Hyperosmotic Stress. Plays a key role in pathogenicity. Likely contributes to post-penetration virulence. The protein is Chitin synthase 5 of Verticillium dahliae (strain VdLs.17 / ATCC MYA-4575 / FGSC 10137) (Verticillium wilt).